The primary structure comprises 866 residues: Translation initiation factor IF-2 (866 aa).

2 disordered regions span residues 1–63 and 92–257; these read MTND…AAVQ and VVRA…RGRS. Positions 26–36 are enriched in polar residues; it reads ETGQVRQSFSH. The segment covering 92–135 has biased composition (basic and acidic residues); that stretch reads VVRAAEEAERKRLEEIERRRREEEEARLKVEEEARRKAEEEAAR. Composition is skewed to low complexity over residues 152 to 164 and 179 to 197; these read VAPA…AAPQ and PDAS…TEAP. One can recognise a tr-type G domain in the interval 365 to 533; that stretch reads SRPPVVTVMG…AILLQSEILD (169 aa). Positions 374 to 381 are G1; that stretch reads GHVDHGKT. Residue 374-381 participates in GTP binding; sequence GHVDHGKT. The tract at residues 399–403 is G2; sequence GITQH. Residues 421–424 are G3; sequence DTPG. GTP is bound by residues 421 to 425 and 475 to 478; these read DTPGH and NKMD. The interval 475 to 478 is G4; the sequence is NKMD. The segment at 511–513 is G5; that stretch reads SAK.

This sequence belongs to the TRAFAC class translation factor GTPase superfamily. Classic translation factor GTPase family. IF-2 subfamily.

The protein localises to the cytoplasm. One of the essential components for the initiation of protein synthesis. Protects formylmethionyl-tRNA from spontaneous hydrolysis and promotes its binding to the 30S ribosomal subunits. Also involved in the hydrolysis of GTP during the formation of the 70S ribosomal complex. The sequence is that of Translation initiation factor IF-2 from Rhodospirillum rubrum (strain ATCC 11170 / ATH 1.1.1 / DSM 467 / LMG 4362 / NCIMB 8255 / S1).